Consider the following 643-residue polypeptide: Protein ecdysoneless homolog (643 aa).

Disordered stretches follow at residues 428 to 458 (EFYN…NNFD) and 501 to 600 (IESM…FTPV). Positions 446-456 (AGSSSDANMNN) are enriched in polar residues. The span at 528–543 (MDFDDVEDDSEGEESN) shows a compositional bias: acidic residues. A compositionally biased stretch (polar residues) spans 564–580 (NSTLEKSFENVNQQHSS). Over residues 581 to 592 (KQNEESSKTRDE) the composition is skewed to basic and acidic residues.

The protein belongs to the ECD family.

The chain is Protein ecdysoneless homolog from Arabidopsis thaliana (Mouse-ear cress).